A 314-amino-acid polypeptide reads, in one-letter code: Protein YdgH (314 aa).

An N-terminal signal peptide occupies residues 1-19; it reads MKLKNTLLASALLSAMAFS.

The protein to E.coli YjfY.

The protein is Protein YdgH (ydgH) of Escherichia coli (strain K12).